Here is a 444-residue protein sequence, read N- to C-terminus: Spermidine/putrescine import ATP-binding protein PotA (444 aa).

Residues Ile11 to Ile332 form the ABC transporter domain. Gly43–Thr50 contributes to the ATP binding site. The segment at Arg111–Arg201 is insert.

It belongs to the ABC transporter superfamily. Spermidine/putrescine importer (TC 3.A.1.11.1) family. In terms of assembly, the complex is composed of two ATP-binding proteins (PotA), two transmembrane proteins (PotB and PotC) and a solute-binding protein (PotD).

It localises to the cell membrane. It catalyses the reaction ATP + H2O + polyamine-[polyamine-binding protein]Side 1 = ADP + phosphate + polyamineSide 2 + [polyamine-binding protein]Side 1.. Part of the ABC transporter complex PotABCD involved in spermidine/putrescine import. Responsible for energy coupling to the transport system. The sequence is that of Spermidine/putrescine import ATP-binding protein PotA from Mesomycoplasma hyopneumoniae (strain J / ATCC 25934 / NCTC 10110) (Mycoplasma hyopneumoniae).